The sequence spans 353 residues: GTPase Obg (353 aa).

Residues 1 to 159 form the Obg domain; it reads MKFLDEAKVY…RWIWLRLKLI (159 aa). The OBG-type G domain occupies 160–327; it reads ADAGLVGLPN…ALRALVAVIG (168 aa). GTP contacts are provided by residues 166-173, 191-195, 212-215, 279-282, and 308-310; these read GLPNAGKS, FTTLH, DIPG, NKID, and SGV. Mg(2+) contacts are provided by Ser173 and Thr193.

The protein belongs to the TRAFAC class OBG-HflX-like GTPase superfamily. OBG GTPase family. As to quaternary structure, monomer. Mg(2+) is required as a cofactor.

It localises to the cytoplasm. An essential GTPase which binds GTP, GDP and possibly (p)ppGpp with moderate affinity, with high nucleotide exchange rates and a fairly low GTP hydrolysis rate. Plays a role in control of the cell cycle, stress response, ribosome biogenesis and in those bacteria that undergo differentiation, in morphogenesis control. This is GTPase Obg from Rhodopseudomonas palustris (strain ATCC BAA-98 / CGA009).